Reading from the N-terminus, the 362-residue chain is Bifunctional chorismate mutase/prephenate dehydratase (362 aa).

Residues 1–92 (MEELKELRKE…ACLSLEKKIK (92 aa)) enclose the Chorismate mutase domain. Positions 8, 25, 36, and 49 each coordinate substrate. A Prephenate dehydratase domain is found at 93 to 267 (VAYLGPKATF…NFTRFLVIAK (175 aa)). The region spanning 279 to 356 (SILFGVKDEP…QFLKVLGSYP (78 aa)) is the ACT domain.

The protein localises to the cytoplasm. It carries out the reaction chorismate = prephenate. It catalyses the reaction prephenate + H(+) = 3-phenylpyruvate + CO2 + H2O. It participates in amino-acid biosynthesis; L-phenylalanine biosynthesis; phenylpyruvate from prephenate: step 1/1. Its pathway is metabolic intermediate biosynthesis; prephenate biosynthesis; prephenate from chorismate: step 1/1. Functionally, catalyzes the Claisen rearrangement of chorismate to prephenate and the decarboxylation/dehydration of prephenate to phenylpyruvate. This chain is Bifunctional chorismate mutase/prephenate dehydratase (pheA), found in Aquifex aeolicus (strain VF5).